The sequence spans 155 residues: Cyanate hydratase (155 aa).

Catalysis depends on residues Arg-101, Glu-104, and Ser-127.

Belongs to the cyanase family.

It carries out the reaction cyanate + hydrogencarbonate + 3 H(+) = NH4(+) + 2 CO2. Catalyzes the reaction of cyanate with bicarbonate to produce ammonia and carbon dioxide. The polypeptide is Cyanate hydratase (Coccidioides posadasii (strain C735) (Valley fever fungus)).